The sequence spans 291 residues: MNSGYLHFPDFDPVIFSLGPVSLHWYGLMYLVGFVFAMWLATRRANRPGSGWTKNEVENLLYAGFLGVFLGGRIGYVLFYNLPVFLADPLYLFRVWDGGMSFHGGLIGVILVMIIFARRTKRTFFQVSDFIAPLIPFGLGAGRLGNFINGELWGRVDPSFHYTMIFPGSRAEDLALLPTHPEWQSLFDTYGALPRHASQLYELALEGVVLFLILNLFIRKPRPTGSVSGLFLIGYGLFRIIVEFFRQPDAQFTGGWVQYISMGQILSIPMVLAGIIMMVWAYRHRPQQQNS.

7 helical membrane-spanning segments follow: residues 21–41, 60–80, 96–116, 130–150, 198–218, 225–245, and 260–280; these read VSLH…MWLA, LLYA…VLFY, WDGG…MIIF, FIAP…FING, SQLY…NLFI, GSVS…VEFF, and ISMG…MMVW. Arg-143 contributes to the a 1,2-diacyl-sn-glycero-3-phospho-(1'-sn-glycerol) binding site.

Belongs to the Lgt family.

The protein localises to the cell inner membrane. The catalysed reaction is L-cysteinyl-[prolipoprotein] + a 1,2-diacyl-sn-glycero-3-phospho-(1'-sn-glycerol) = an S-1,2-diacyl-sn-glyceryl-L-cysteinyl-[prolipoprotein] + sn-glycerol 1-phosphate + H(+). It functions in the pathway protein modification; lipoprotein biosynthesis (diacylglyceryl transfer). Its function is as follows. Catalyzes the transfer of the diacylglyceryl group from phosphatidylglycerol to the sulfhydryl group of the N-terminal cysteine of a prolipoprotein, the first step in the formation of mature lipoproteins. The polypeptide is Phosphatidylglycerol--prolipoprotein diacylglyceryl transferase (Klebsiella pneumoniae (strain 342)).